Reading from the N-terminus, the 732-residue chain is Small conductance calcium-activated potassium channel protein 3 (732 aa).

Over residues 1–11 (MDTSGHFHDSG) the composition is skewed to basic and acidic residues. 2 disordered regions span residues 1–82 (MDTS…QQAP) and 103–162 (HSSP…ASPL). A compositionally biased stretch (pro residues) spans 35–59 (QPPPPSAPPAVPQQPPGPLLQPQPP). Residues 60–82 (QLQQQQQQQQQQQQQQQQQQQAP) are compositionally biased toward low complexity. Positions 113–133 (NSANSTAILHPSSRQGSQLNL) are enriched in polar residues. Low complexity predominate over residues 139–148 (GHSPSSTATS). Phosphoserine is present on S168. Residues 241–257 (THNHQHAGTTAGSTTFP) show a composition bias toward polar residues. The interval 241-260 (THNHQHAGTTAGSTTFPKAN) is disordered. The chain crosses the membrane as a helical span at residues 289–309 (LIFGMFGIVVMVIETELSWGL). The helical transmembrane segment at 316–336 (FSLALKCLISLSTIILLGLII) threads the bilayer. A helical transmembrane segment spans residues 367–387 (ISLEMLVCAIHPIPGEYKFFW). A helical transmembrane segment spans residues 406 to 426 (IILSIPMFLRLYLIARVMLLH). Residues 455–475 (LMTICPGTVLLVFSISLWIIA) traverse the membrane as a helical segment. The pore-forming intramembrane region spans 495–515 (FLGAMWLISITFLSIGYGDMV). The helical transmembrane segment at 524–544 (VCLLTGIMGAGCTALVVAVVA) threads the bilayer. Positions 562–638 (DTQLTKRIKN…LVDLSKMQNV (77 aa)) are calmodulin-binding. Residues 643–670 (ITELNDRSEDLEKQIGSLESKLEHLTAS) are a coiled coil. Positions 704 to 732 (GTSHAPPSDSPIGISSTSFPTPYTSSSSC) are disordered. Residues 718 to 732 (SSTSFPTPYTSSSSC) show a composition bias toward low complexity.

Belongs to the potassium channel KCNN family. KCa2.3/KCNN3 subfamily. As to quaternary structure, homodimer. Heteromultimer with KCNN2 or KCNN1; this modulates plasma membrane expression and consequently the small conductance calcium-activated potassium channel activity. The complex is composed of 4 channel subunits each of which binds to a calmodulin subunit which regulates the channel activity through calcium-binding. Interacts with CALM1.

It localises to the cell membrane. The protein localises to the cytoplasm. Its subcellular location is the myofibril. The protein resides in the sarcomere. It is found in the z line. The catalysed reaction is K(+)(in) = K(+)(out). Its activity is regulated as follows. Inhibited by bee venom neurotoxin apamin. Its function is as follows. Small conductance calcium-activated potassium channel that mediates the voltage-independent transmembrane transfer of potassium across the cell membrane through a constitutive interaction with calmodulin which binds the intracellular calcium allowing its opening. The current is characterized by a voltage-independent activation, an intracellular calcium concentration increase-dependent activation and a single-channel conductance of 10 picosiemens. Also presents an inwardly rectifying current, thus reducing its already small outward conductance of potassium ions, which is particularly the case when the membrane potential displays positive values, above + 20 mV. Activation is followed by membrane hyperpolarization. Thought to regulate neuronal excitability by contributing to the slow component of synaptic afterhyperpolarization. This chain is Small conductance calcium-activated potassium channel protein 3, found in Rattus norvegicus (Rat).